The sequence spans 445 residues: Glycine--tRNA ligase (445 aa).

The substrate site is built by Lys97 and Glu145. Residues 177–179 (RNE), 187–192 (FRTCEF), 262–263 (EI), and 308–311 (GLTR) contribute to the ATP site. 192–196 (FEQME) is a substrate binding site. Residue 304–308 (ETSLG) coordinates substrate.

Belongs to the class-II aminoacyl-tRNA synthetase family. In terms of assembly, homodimer.

The protein resides in the cytoplasm. The catalysed reaction is tRNA(Gly) + glycine + ATP = glycyl-tRNA(Gly) + AMP + diphosphate. Functionally, catalyzes the attachment of glycine to tRNA(Gly). This chain is Glycine--tRNA ligase, found in Borrelia hermsii (strain HS1 / DAH).